Consider the following 160-residue polypeptide: Ureidoglycolate lyase (160 aa).

The protein belongs to the ureidoglycolate lyase family. In terms of assembly, homodimer. Ni(2+) is required as a cofactor.

It catalyses the reaction (S)-ureidoglycolate = urea + glyoxylate. It functions in the pathway nitrogen metabolism; (S)-allantoin degradation. Its function is as follows. Catalyzes the catabolism of the allantoin degradation intermediate (S)-ureidoglycolate, generating urea and glyoxylate. Involved in the utilization of allantoin as nitrogen source. This chain is Ureidoglycolate lyase, found in Salmonella agona (strain SL483).